The primary structure comprises 344 residues: MQPRWVLLVALSVLFLSGRAGALTEGLYCGRQVCYDVLGVSRDANKGDIARAYRQLARKYHPDRYRPGDQLGPDGETRESAQEKFILVATAYETLKDEETRKDYDYMLDHPEEYYRHYYHYYSRRLAPKVDVRIVILVSVCAVSIFQYYSWWSSYNEAINYLATVTKYRIQAMEIAKQQGLLNRTKEKGKNRRSKEEIKSEEEEIIRDIIKNKIDIKGGYQKPQIFDILLFQIILFPYYMFKYISWYVRWIYTFNIQGKEYGEEEKLYLIRKYMKMSQSQFDTLEEHRKNTFLEQKLWIKENYEVYRQEQEEETKKKMASDPRWKRYRRWMKNEGPGRLTFADD.

The chain crosses the membrane as a helical span at residues 5–25 (WVLLVALSVLFLSGRAGALTE). In terms of domain architecture, J spans 33-108 (VCYDVLGVSR…ETRKDYDYML (76 aa)). Helical transmembrane passes span 134–154 (IVIL…WWSS) and 228–248 (ILLF…SWYV).

The protein belongs to the DNAJC25 family.

Its subcellular location is the membrane. The protein is DnaJ homolog subfamily C member 25 (dnajc25) of Xenopus laevis (African clawed frog).